Here is a 160-residue protein sequence, read N- to C-terminus: 6,7-dimethyl-8-ribityllumazine synthase (160 aa).

Residues W26, 59 to 61 (AVE), and 81 to 83 (VVI) contribute to the 5-amino-6-(D-ribitylamino)uracil site. 86 to 87 (GT) contacts (2S)-2-hydroxy-3-oxobutyl phosphate. H89 (proton donor) is an active-site residue. F114 contacts 5-amino-6-(D-ribitylamino)uracil. Position 128 (R128) interacts with (2S)-2-hydroxy-3-oxobutyl phosphate.

Belongs to the DMRL synthase family.

The catalysed reaction is (2S)-2-hydroxy-3-oxobutyl phosphate + 5-amino-6-(D-ribitylamino)uracil = 6,7-dimethyl-8-(1-D-ribityl)lumazine + phosphate + 2 H2O + H(+). It participates in cofactor biosynthesis; riboflavin biosynthesis; riboflavin from 2-hydroxy-3-oxobutyl phosphate and 5-amino-6-(D-ribitylamino)uracil: step 1/2. Functionally, catalyzes the formation of 6,7-dimethyl-8-ribityllumazine by condensation of 5-amino-6-(D-ribitylamino)uracil with 3,4-dihydroxy-2-butanone 4-phosphate. This is the penultimate step in the biosynthesis of riboflavin. This is 6,7-dimethyl-8-ribityllumazine synthase from Frankia casuarinae (strain DSM 45818 / CECT 9043 / HFP020203 / CcI3).